The following is a 182-amino-acid chain: Transcription termination/antitermination protein NusG (182 aa).

In terms of domain architecture, KOW spans 131–161; sequence GEVVRVNEGPFADFNGTVEEVDYEKSRLKVS.

This sequence belongs to the NusG family.

Participates in transcription elongation, termination and antitermination. The chain is Transcription termination/antitermination protein NusG from Vibrio parahaemolyticus serotype O3:K6 (strain RIMD 2210633).